A 56-amino-acid polypeptide reads, in one-letter code: Large ribosomal subunit protein bL33 (56 aa).

It belongs to the bacterial ribosomal protein bL33 family.

The protein is Large ribosomal subunit protein bL33 of Delftia acidovorans (strain DSM 14801 / SPH-1).